We begin with the raw amino-acid sequence, 111 residues long: uncharacterized protein (111 aa).

2 helical membrane-spanning segments follow: residues 18-38 (LNVF…LFVS) and 42-62 (LALA…RTFP).

The protein resides in the membrane. This is an uncharacterized protein from Saccharomyces cerevisiae (strain ATCC 204508 / S288c) (Baker's yeast).